Consider the following 415-residue polypeptide: Serine hydroxymethyltransferase (415 aa).

(6S)-5,6,7,8-tetrahydrofolate is bound by residues Leu-117 and 121-123; that span reads GHL. Position 226 is an N6-(pyridoxal phosphate)lysine (Lys-226). (6S)-5,6,7,8-tetrahydrofolate is bound at residue Glu-241.

Belongs to the SHMT family. As to quaternary structure, homodimer. The cofactor is pyridoxal 5'-phosphate.

Its subcellular location is the cytoplasm. The enzyme catalyses (6R)-5,10-methylene-5,6,7,8-tetrahydrofolate + glycine + H2O = (6S)-5,6,7,8-tetrahydrofolate + L-serine. The protein operates within one-carbon metabolism; tetrahydrofolate interconversion. It functions in the pathway amino-acid biosynthesis; glycine biosynthesis; glycine from L-serine: step 1/1. Its function is as follows. Catalyzes the reversible interconversion of serine and glycine with tetrahydrofolate (THF) serving as the one-carbon carrier. This reaction serves as the major source of one-carbon groups required for the biosynthesis of purines, thymidylate, methionine, and other important biomolecules. Also exhibits THF-independent aldolase activity toward beta-hydroxyamino acids, producing glycine and aldehydes, via a retro-aldol mechanism. This chain is Serine hydroxymethyltransferase, found in Bacillus licheniformis (strain ATCC 14580 / DSM 13 / JCM 2505 / CCUG 7422 / NBRC 12200 / NCIMB 9375 / NCTC 10341 / NRRL NRS-1264 / Gibson 46).